The following is a 311-amino-acid chain: Protease HtpX homolog 1 (311 aa).

The next 2 membrane-spanning stretches (helical) occupy residues 12-32 and 35-55; these read VISLGLTIISEGIVLIGIASL and ISLFFIFPALVIFWLFQWIIS. Residue His-137 participates in Zn(2+) binding. Glu-138 is a catalytic residue. His-141 lines the Zn(2+) pocket. Helical transmembrane passes span 159–179 and 184–204; these read VLGYISTLLMNFGYLALFLAA and LLFAIAALAIGFVIFVVTFIL. Glu-216 is a Zn(2+) binding site.

The protein belongs to the peptidase M48B family. Zn(2+) serves as cofactor.

Its subcellular location is the cell membrane. This is Protease HtpX homolog 1 from Saccharolobus solfataricus (strain ATCC 35092 / DSM 1617 / JCM 11322 / P2) (Sulfolobus solfataricus).